A 1370-amino-acid polypeptide reads, in one-letter code: DNA-directed RNA polymerase subunit beta (1370 aa).

It belongs to the RNA polymerase beta chain family. In terms of assembly, the RNAP catalytic core consists of 2 alpha, 1 beta, 1 beta' and 1 omega subunit. When a sigma factor is associated with the core the holoenzyme is formed, which can initiate transcription.

The catalysed reaction is RNA(n) + a ribonucleoside 5'-triphosphate = RNA(n+1) + diphosphate. DNA-dependent RNA polymerase catalyzes the transcription of DNA into RNA using the four ribonucleoside triphosphates as substrates. This Syntrophobacter fumaroxidans (strain DSM 10017 / MPOB) protein is DNA-directed RNA polymerase subunit beta.